Here is a 209-residue protein sequence, read N- to C-terminus: Protein TIC 20-v, chloroplastic (209 aa).

Residues 1–49 (MAIISQFFAPLPSLTGTLTLTGRSFLPLNLDTQFPKPRLSRDRAATLVL) constitute a chloroplast transit peptide. Helical transmembrane passes span 63 to 83 (IISA…GKFI), 103 to 123 (AFKS…FVVV), 132 to 152 (VRFN…PDLL), and 173 to 193 (TVFL…LFGL).

This sequence belongs to the Tic20 family. Part of the Tic complex. Expressed in leaves, siliques and roots.

It localises to the plastid. The protein localises to the chloroplast inner membrane. Its function is as follows. May be involved in protein precursor import into chloroplasts. Not redundant with TIC20-I, TIC20-II or TIC20-IV. This Arabidopsis thaliana (Mouse-ear cress) protein is Protein TIC 20-v, chloroplastic (TIC20-V).